The chain runs to 209 residues: MAKNISTKQLSVLEYIYKTVNAQGYPPTVREIGSAIGLSSTSTVHGHIDRLQKNGFLEKDPTKPRALEVTKLGLDALGVQDKNPTIPLLGVVTAGEPILAVEEATDFFPVPPEYENDSSNLFMLTIRGESMINAGILSGDQVIVRKQSTADNGTIVIAMTDENEATCKRFYRESDHIRLQPENDTMAPIILDNVTILGKVVGLFRDNIY.

A DNA-binding region (H-T-H motif) is located at residues 29-49 (VREIGSAIGLSSTSTVHGHID). Catalysis depends on for autocatalytic cleavage activity residues S130 and K168.

It belongs to the peptidase S24 family. As to quaternary structure, homodimer.

It catalyses the reaction Hydrolysis of Ala-|-Gly bond in repressor LexA.. Functionally, represses a number of genes involved in the response to DNA damage (SOS response), including recA and lexA. In the presence of single-stranded DNA, RecA interacts with LexA causing an autocatalytic cleavage which disrupts the DNA-binding part of LexA, leading to derepression of the SOS regulon and eventually DNA repair. This chain is LexA repressor, found in Pediococcus pentosaceus (strain ATCC 25745 / CCUG 21536 / LMG 10740 / 183-1w).